We begin with the raw amino-acid sequence, 668 residues long: Ubiquitin ligase complex F-box protein UFO1 (668 aa).

The F-box domain maps to G5–L51. A Phosphoserine modification is found at S511. T514 carries the phosphothreonine modification. UIM domains follow at residues D547 to Q566, E583 to R602, and N651 to N668. Polar residues predominate over residues E564 to N578. 2 disordered regions span residues E564–D585 and D599–T639.

In terms of assembly, interacts with SKP1. Component of the probable SCF(UFO1) complex containing CDC53, SKP1, RBX1 and UFO1.

Its pathway is protein modification; protein ubiquitination. Its function is as follows. Substrate recognition component of a SCF (SKP1-CUL1-F-box protein) E3 ubiquitin-protein ligase complex which mediates the ubiquitination and subsequent proteasomal degradation of target proteins. Probably recognizes and binds to phosphorylated target proteins. This chain is Ubiquitin ligase complex F-box protein UFO1 (UFO1), found in Saccharomyces cerevisiae (strain ATCC 204508 / S288c) (Baker's yeast).